The primary structure comprises 411 residues: Tyrosine--tRNA ligase (411 aa).

The 'HIGH' region signature appears at 50–59 (PTRPDLHLGH). The 'KMSKS' region motif lies at 236–240 (KMSKS). Residue K239 participates in ATP binding. One can recognise an S4 RNA-binding domain in the interval 345–409 (VSMAKLVVLA…GKDKFARLVL (65 aa)).

The protein belongs to the class-I aminoacyl-tRNA synthetase family. TyrS type 2 subfamily. As to quaternary structure, homodimer.

The protein localises to the cytoplasm. The enzyme catalyses tRNA(Tyr) + L-tyrosine + ATP = L-tyrosyl-tRNA(Tyr) + AMP + diphosphate + H(+). Catalyzes the attachment of tyrosine to tRNA(Tyr) in a two-step reaction: tyrosine is first activated by ATP to form Tyr-AMP and then transferred to the acceptor end of tRNA(Tyr). This is Tyrosine--tRNA ligase from Deinococcus radiodurans (strain ATCC 13939 / DSM 20539 / JCM 16871 / CCUG 27074 / LMG 4051 / NBRC 15346 / NCIMB 9279 / VKM B-1422 / R1).